The following is a 263-amino-acid chain: Methylesterase 1 (263 aa).

The active-site Acyl-ester intermediate is Ser85. Residues Asp213 and His241 each act as charge relay system in the active site.

Belongs to the AB hydrolase superfamily. Methylesterase family.

The enzyme catalyses methyl (indol-3-yl)acetate + H2O = (indol-3-yl)acetate + methanol + H(+). It catalyses the reaction methyl (-)-jasmonate + H2O = jasmonate + methanol + H(+). The catalysed reaction is methyl salicylate + H2O = salicylate + methanol + H(+). The protein operates within plant hormone biosynthesis. It participates in lipid metabolism; oxylipin biosynthesis. Its activity is regulated as follows. Esterase activity is down-regulated by salicylic acid (SA). Methylesterase shown to have carboxylesterase activity, methyl indole-3-acetic acid (MeIAA) esterase activity, methyl salicylate (MeSA) esterase activity and methyl jasmonate (MeJA) esterase activity in vitro. Required to convert methyl salicylate (MeSA) to salicylic acid (SA) as part of the signal transduction pathways that activate systemic acquired resistance in systemic tissue. MeSA is believed to be an inactive form that needs to be demethylated to exert a biological effect. The sequence is that of Methylesterase 1 from Arabidopsis thaliana (Mouse-ear cress).